The primary structure comprises 274 residues: Nitrogenase iron protein (274 aa).

Residue glycine 8–serine 15 participates in ATP binding. Cysteine 94 is a binding site for [4Fe-4S] cluster. Arginine 97 is subject to ADP-ribosylarginine; by dinitrogenase reductase ADP-ribosyltransferase. Cysteine 131 serves as a coordination point for [4Fe-4S] cluster.

The protein belongs to the NifH/BchL/ChlL family. In terms of assembly, homodimer. [4Fe-4S] cluster is required as a cofactor. In terms of processing, the reversible ADP-ribosylation of Arg-97 inactivates the nitrogenase reductase and regulates nitrogenase activity.

It catalyses the reaction N2 + 8 reduced [2Fe-2S]-[ferredoxin] + 16 ATP + 16 H2O = H2 + 8 oxidized [2Fe-2S]-[ferredoxin] + 2 NH4(+) + 16 ADP + 16 phosphate + 6 H(+). In terms of biological role, the key enzymatic reactions in nitrogen fixation are catalyzed by the nitrogenase complex, which has 2 components: the iron protein and the molybdenum-iron protein. The chain is Nitrogenase iron protein from Dehalococcoides mccartyi (strain ATCC BAA-2266 / KCTC 15142 / 195) (Dehalococcoides ethenogenes (strain 195)).